Here is an 87-residue protein sequence, read N- to C-terminus: MAERRKFKKRFCKYCEQKVDFIDYKDLNSLKFSLSERFKIMPRRLTGNCKRHQEMVTVAIKRARQTALIPYIVDRKNVVENPFELIK.

The protein belongs to the bacterial ribosomal protein bS18 family. In terms of assembly, part of the 30S ribosomal subunit. Forms a tight heterodimer with protein bS6.

In terms of biological role, binds as a heterodimer with protein bS6 to the central domain of the 16S rRNA, where it helps stabilize the platform of the 30S subunit. This chain is Small ribosomal subunit protein bS18, found in Sulfurovum sp. (strain NBC37-1).